The primary structure comprises 226 residues: ATP-dependent dethiobiotin synthetase BioD (226 aa).

12-17 (GVGKTV) is a binding site for ATP. Residue Thr16 coordinates Mg(2+). The active site involves Lys37. Thr41 lines the substrate pocket. ATP contacts are provided by residues Asp49, 108–111 (EGAG), 169–170 (GS), and 197–199 (PAG). 2 residues coordinate Mg(2+): Asp49 and Glu108.

This sequence belongs to the dethiobiotin synthetase family. In terms of assembly, homodimer. Mg(2+) is required as a cofactor.

It is found in the cytoplasm. The catalysed reaction is (7R,8S)-7,8-diammoniononanoate + CO2 + ATP = (4R,5S)-dethiobiotin + ADP + phosphate + 3 H(+). It participates in cofactor biosynthesis; biotin biosynthesis; biotin from 7,8-diaminononanoate: step 1/2. Catalyzes a mechanistically unusual reaction, the ATP-dependent insertion of CO2 between the N7 and N8 nitrogen atoms of 7,8-diaminopelargonic acid (DAPA, also called 7,8-diammoniononanoate) to form a ureido ring. The sequence is that of ATP-dependent dethiobiotin synthetase BioD from Mycobacterium leprae (strain Br4923).